The sequence spans 398 residues: Acetate kinase (398 aa).

Asn8 is a Mg(2+) binding site. ATP is bound at residue Lys15. Arg89 provides a ligand contact to substrate. Asp146 acts as the Proton donor/acceptor in catalysis. Residues 206–210 (HIGNG), 283–285 (DMR), and 331–335 (GMGEN) each bind ATP. Glu383 is a binding site for Mg(2+).

The protein belongs to the acetokinase family. In terms of assembly, homodimer. Mg(2+) serves as cofactor. It depends on Mn(2+) as a cofactor.

Its subcellular location is the cytoplasm. The enzyme catalyses acetate + ATP = acetyl phosphate + ADP. It participates in metabolic intermediate biosynthesis; acetyl-CoA biosynthesis; acetyl-CoA from acetate: step 1/2. Its function is as follows. Catalyzes the formation of acetyl phosphate from acetate and ATP. Can also catalyze the reverse reaction. This Streptococcus pyogenes serotype M12 (strain MGAS2096) protein is Acetate kinase.